Here is an 83-residue protein sequence, read N- to C-terminus: Retinal cone rhodopsin-sensitive cGMP 3',5'-cyclic phosphodiesterase subunit gamma (83 aa).

Positions 1–51 (MSDSPCLSPPAPSQGPTTPRKGPPKFKQRQTRQFKSKPPKKGVKGFGDDIP) are disordered. A compositionally biased stretch (basic residues) spans 22–43 (GPPKFKQRQTRQFKSKPPKKGV).

It belongs to the rod/cone cGMP-PDE gamma subunit family. In terms of assembly, tetramer composed of two catalytic chains (alpha and beta), and two inhibitory chains (gamma).

It carries out the reaction 3',5'-cyclic GMP + H2O = GMP + H(+). Participates in processes of transmission and amplification of the visual signal. cGMP-PDEs are the effector molecules in G-protein-mediated phototransduction in vertebrate rods and cones. This Rattus norvegicus (Rat) protein is Retinal cone rhodopsin-sensitive cGMP 3',5'-cyclic phosphodiesterase subunit gamma (Pde6h).